The following is a 470-amino-acid chain: MGRYSGKTCRLLFMLVLTAAFFVAELVSGYLGNSIALLSDSFNMLSDLISLCVGLGSGYIARRGPRGSSATYGYVRAEVVGALSNAVFLTALCFTIFVEAVLRLARPERIDDPELVLIVGALGLAVNVVGLLIFQDCGACFSRCTRGRRTRPSQQPSQGDPRGALGCPQEAATATAPGSGTAVTLRGSSAGRKQQEGATVFSNVAGDSLNTENEPEETTKKEKKSEALNIRGVLLHVMGDALGSVVVVITAIIFYVQPLRREDPCNWQCYIDPSLTVVMVIIILSSAFPLIKETAVILLQMVPKGVNMEELMSQLSTVPGISSVHEVHIWELISGKIIATLHIKHQKGTEYQDASRKIREIFHHAGIHNVTIQFETLDLKEALEQKDFLLTCSAPCITQSCAKKLCCPPGTLPLALVNGCAEHNGRSSRESYRSIEAPEVAIDVDGCPREQGQTLSKTQERQHYENSTHF.

At 1–10 (MGRYSGKTCR) the chain is on the cytoplasmic side. A helical transmembrane segment spans residues 11–31 (LLFMLVLTAAFFVAELVSGYL). The Extracellular segment spans residues 32–34 (GNS). The chain crosses the membrane as a helical span at residues 35-55 (IALLSDSFNMLSDLISLCVGL). Over 56 to 81 (GSGYIARRGPRGSSATYGYVRAEVVG) the chain is Cytoplasmic. Residues 82–102 (ALSNAVFLTALCFTIFVEAVL) traverse the membrane as a helical segment. The Extracellular segment spans residues 103–113 (RLARPERIDDP). A helical transmembrane segment spans residues 114–134 (ELVLIVGALGLAVNVVGLLIF). The Cytoplasmic segment spans residues 135–233 (QDCGACFSRC…KSEALNIRGV (99 aa)). The interval 146–223 (RGRRTRPSQQ…EPEETTKKEK (78 aa)) is disordered. Residues 171–184 (AATATAPGSGTAVT) show a composition bias toward low complexity. Residues 234-254 (LLHVMGDALGSVVVVITAIIF) traverse the membrane as a helical segment. Residues 255–270 (YVQPLRREDPCNWQCY) are Extracellular-facing. A helical membrane pass occupies residues 271-291 (IDPSLTVVMVIIILSSAFPLI). Residues 292–470 (KETAVILLQM…RQHYENSTHF (179 aa)) are Cytoplasmic-facing. The segment at 300-470 (QMVPKGVNME…RQHYENSTHF (171 aa)) is required for plasma membrane localization. Positions 451–470 (QGQTLSKTQERQHYENSTHF) are disordered. Over residues 458-470 (TQERQHYENSTHF) the composition is skewed to basic and acidic residues.

Belongs to the cation diffusion facilitator (CDF) transporter (TC 2.A.4) family. SLC30A subfamily. Forms homodimers. Forms heterodimers and high-molecular weight oligomers with SLC30A3, SLC30A2 and SLC30A4; heterodimerization is mediated by covalent-bound tyrosine residues, occurs probably in a tissue-specific manner and could mediate the intracellular zinc transport activity into early endosomes and recycling endosomes. As to expression, specifically expressed in fetal liver and fetal brain.

The protein resides in the cell membrane. Its subcellular location is the golgi apparatus membrane. It is found in the recycling endosome membrane. It localises to the early endosome membrane. It carries out the reaction Mn(2+)(out) + Ca(2+)(in) = Mn(2+)(in) + Ca(2+)(out). The enzyme catalyses Zn(2+)(in) = Zn(2+)(out). In terms of biological role, calcium:manganese antiporter of the plasma membrane mediating the efflux of intracellular manganese coupled to an active extracellular calcium exchange. Required for intracellular manganese homeostasis, an essential cation for the function of several enzymes, including some crucially important for the metabolism of neurotransmitters and other neuronal metabolic pathways. Manganese can also be cytotoxic and induce oxidative stress, mitochondrial dysfunction and apoptosis. Could also have an intracellular zinc ion transporter activity, directly regulating intracellular zinc ion homeostasis and more indirectly various signaling pathway and biological processes. This Mus musculus (Mouse) protein is Calcium/manganese antiporter SLC30A10.